We begin with the raw amino-acid sequence, 272 residues long: Formamidopyrimidine-DNA glycosylase (272 aa).

Pro-2 acts as the Schiff-base intermediate with DNA in catalysis. The Proton donor role is filled by Glu-3. Residue Lys-57 is the Proton donor; for beta-elimination activity of the active site. 3 residues coordinate DNA: His-90, Arg-109, and Lys-150. The FPG-type zinc finger occupies 235-269 (HVYGRAKKKCLLCSSIIQEEKIGQRNTFWCGHCQP). The Proton donor; for delta-elimination activity role is filled by Arg-259.

The protein belongs to the FPG family. Monomer. Zn(2+) is required as a cofactor.

It catalyses the reaction Hydrolysis of DNA containing ring-opened 7-methylguanine residues, releasing 2,6-diamino-4-hydroxy-5-(N-methyl)formamidopyrimidine.. It carries out the reaction 2'-deoxyribonucleotide-(2'-deoxyribose 5'-phosphate)-2'-deoxyribonucleotide-DNA = a 3'-end 2'-deoxyribonucleotide-(2,3-dehydro-2,3-deoxyribose 5'-phosphate)-DNA + a 5'-end 5'-phospho-2'-deoxyribonucleoside-DNA + H(+). In terms of biological role, involved in base excision repair of DNA damaged by oxidation or by mutagenic agents. Acts as a DNA glycosylase that recognizes and removes damaged bases. Has a preference for oxidized purines, such as 7,8-dihydro-8-oxoguanine (8-oxoG). Has AP (apurinic/apyrimidinic) lyase activity and introduces nicks in the DNA strand. Cleaves the DNA backbone by beta-delta elimination to generate a single-strand break at the site of the removed base with both 3'- and 5'-phosphates. The chain is Formamidopyrimidine-DNA glycosylase from Aliivibrio fischeri (strain ATCC 700601 / ES114) (Vibrio fischeri).